The chain runs to 187 residues: Elongation factor P (187 aa).

The protein belongs to the elongation factor P family.

It is found in the cytoplasm. It functions in the pathway protein biosynthesis; polypeptide chain elongation. In terms of biological role, involved in peptide bond synthesis. Stimulates efficient translation and peptide-bond synthesis on native or reconstituted 70S ribosomes in vitro. Probably functions indirectly by altering the affinity of the ribosome for aminoacyl-tRNA, thus increasing their reactivity as acceptors for peptidyl transferase. In Leifsonia xyli subsp. xyli (strain CTCB07), this protein is Elongation factor P.